The primary structure comprises 506 residues: Maturase K (506 aa).

This sequence belongs to the intron maturase 2 family. MatK subfamily.

It localises to the plastid. Its subcellular location is the chloroplast. In terms of biological role, usually encoded in the trnK tRNA gene intron. Probably assists in splicing its own and other chloroplast group II introns. The sequence is that of Maturase K from Arctostaphylos uva-ursi (Bearberry).